A 5098-amino-acid chain; its full sequence is Malformin synthetase mlfA (5098 aa).

The interval Glu225–Leu616 is adenylation 1. A Carrier 1 domain is found at Ser756–Glu829. Ser790 is modified (O-(pantetheine 4'-phosphoryl)serine). The segment at Glu867–Ala1298 is condensation 1. The segment at Asp1326 to Arg1715 is adenylation 2. A Carrier 2 domain is found at Thr1853–Ala1930. Ser1890 carries the post-translational modification O-(pantetheine 4'-phosphoryl)serine. 2 disordered regions span residues Ala1930–Asp1960 and Gly1993–Ser2022. Composition is skewed to low complexity over residues Ser1933 to Asp1957 and Gly1993 to Ser2011. The interval Glu2063 to Leu2478 is condensation 2. Residues Val2501–Leu2893 form an adenylation 3 region. The 77-residue stretch at Arg3029–Arg3105 folds into the Carrier 3 domain. Ser3066 is subject to O-(pantetheine 4'-phosphoryl)serine. Condensation stretches follow at residues Trp3122–Gln3587 and Asn3608–Met4027. The interval His4052–Phe4442 is adenylation 4. A Carrier 4 domain is found at Met4576–Val4652. Ser4613 is subject to O-(pantetheine 4'-phosphoryl)serine. Residues Asp4689 to Asn5016 are condensation 5.

This sequence belongs to the NRP synthetase family.

It functions in the pathway secondary metabolite biosynthesis. Functionally, nonribosomal peptide synthetase; part of the gene cluster that mediates the biosynthesis of malformins, cyclic pentapeptides with a disulfide bond between 2 consecutive cysteins, that show potential anti-tumor as well as antimalarial and antitrypanosomal properties. The nonribosomal peptide synthetase mlfA is responsible of the formation of the cyclic pentapeptide. The malformin biosynthesis clusters in malformin-producing fungi also contain enzymes involved in the formation of the disulfide bond between the two consecutive cysteins within malformins, in addition to additional tailoring enzymes such as methyltransferases or oxidoreductases. They are also composed of up to 4 major facilitator superfamily transporters, and transcription factors probably involved in the regulation of the expression of those clusters. The chain is Malformin synthetase mlfA from Aspergillus homomorphus (strain CBS 101889).